Reading from the N-terminus, the 480-residue chain is Amino acid permease 5 (480 aa).

The segment at 1–25 (MVVQNVQDLDVLPKHSSDSFDDDGR) is disordered. Over 1–31 (MVVQNVQDLDVLPKHSSDSFDDDGRPKRTGT) the chain is Cytoplasmic. Basic and acidic residues predominate over residues 11–25 (VLPKHSSDSFDDDGR). A run of 2 helical transmembrane segments spans residues 32-52 (VWTASAHIITAVIGSGVLSLA) and 53-73 (WAVAQIGWIGGPVAMLLFSFV). Topologically, residues 74-120 (TFYTSTLLCSCYRSGDSVTGKRNYTYMDAIHSNLGGIKVKVCGVVQY) are cytoplasmic. Residues 121–141 (VNLFGTAIGYTIASAISLVAI) traverse the membrane as a helical segment. At 142–157 (QRTSCQQMNGPNDPCH) the chain is on the extracellular side. The helical transmembrane segment at 158–178 (VNGNVYMIAFGIVQIIFSQIP) threads the bilayer. Residues 179–182 (DFDQ) are Cytoplasmic-facing. Residues 183 to 203 (LWWLSIVAAVMSFAYSAIGLG) form a helical membrane-spanning segment. The Extracellular portion of the chain corresponds to 204 to 241 (LGVSKVVENKEIKGSLTGVTVGTVTLSGTVTSSQKIWR). The helical transmembrane segment at 242 to 262 (TFQSLGNIAFAYSYSMILIEI) threads the bilayer. The Cytoplasmic portion of the chain corresponds to 263–280 (QDTVKSPPAEVNTMRKAT). Residues 281-301 (FVSVAVTTVFYMLCGCVGYAA) traverse the membrane as a helical segment. Residues 302–328 (FGDNAPGNLLAHGGFRNPYWLLDIANL) lie on the Extracellular side of the membrane. Residues 329 to 349 (AIVIHLVGAYQVYCQPLFAFV) traverse the membrane as a helical segment. The Cytoplasmic segment spans residues 350–383 (EKEASRRFPESEFVTKEIKIQLFPGKPFNLNLFR). A helical membrane pass occupies residues 384 to 404 (LVWRTFFVMTTTLISMLMPFF). The Extracellular portion of the chain corresponds to 405-406 (ND). A helical membrane pass occupies residues 407-427 (VVGLLGAIGFWPLTVYFPVEM). Residues 428–445 (YIAQKNVPRWGTKWVCLQ) lie on the Cytoplasmic side of the membrane. The helical transmembrane segment at 446 to 466 (VLSVTCLFVSVAAAAGSVIGI) threads the bilayer. Over 467–480 (VSDLKVYKPFQSEF) the chain is Extracellular.

The protein belongs to the amino acid/polyamine transporter 2 family. Amino acid/auxin permease (AAAP) (TC 2.A.18.2) subfamily. Expressed in leaves, stems, roots, siliques and flowers.

It is found in the cell membrane. With respect to regulation, inhibited by 2,4-dinitrophenol. Functionally, amino acid-proton symporter. Stereospecific transporter with a broad specificity for glutamate and both neutral and basic amino acids. Reduced affinities for asparagine and valine. High affinity transport of the cationic amino acids arginine and lysine, but not of histidine. The protein is Amino acid permease 5 (AAP5) of Arabidopsis thaliana (Mouse-ear cress).